Reading from the N-terminus, the 1030-residue chain is Arrestin domain-containing protein F (1030 aa).

2 disordered regions span residues 1–27 and 119–154; these read MEII…GSKR and ENKN…NNPL. The span at 128–137 shows a compositional bias: acidic residues; sequence NFDDGEEDDT. The segment covering 142–152 has biased composition (low complexity); that stretch reads NINNKNNNNNN. Coiled-coil stretches lie at residues 320 to 374 and 544 to 577; these read HQLE…HNNN and QKLN…IRDQ. Disordered regions lie at residues 539–572 and 885–931; these read SPQS…NSES and NNEK…NNNN. A compositionally biased stretch (basic and acidic residues) spans 547–562; the sequence is NKKDKEKEKEKEKEND. Low complexity predominate over residues 910–931; the sequence is SPSSSSFLSNSSNTSSSKNNNN.

The protein belongs to the arrestin family.

The chain is Arrestin domain-containing protein F (adcF) from Dictyostelium discoideum (Social amoeba).